A 269-amino-acid polypeptide reads, in one-letter code: Tryptophan synthase alpha chain (269 aa).

Catalysis depends on proton acceptor residues E49 and D60.

Belongs to the TrpA family. In terms of assembly, tetramer of two alpha and two beta chains.

The catalysed reaction is (1S,2R)-1-C-(indol-3-yl)glycerol 3-phosphate + L-serine = D-glyceraldehyde 3-phosphate + L-tryptophan + H2O. It functions in the pathway amino-acid biosynthesis; L-tryptophan biosynthesis; L-tryptophan from chorismate: step 5/5. The alpha subunit is responsible for the aldol cleavage of indoleglycerol phosphate to indole and glyceraldehyde 3-phosphate. This chain is Tryptophan synthase alpha chain, found in Pseudomonas syringae pv. syringae.